A 127-amino-acid chain; its full sequence is Glycine cleavage system H protein (127 aa).

The Lipoyl-binding domain maps to 24–105 (TALVGITDFA…YNDGWLVKMK (82 aa)). An N6-lipoyllysine modification is found at lysine 65.

It belongs to the GcvH family. As to quaternary structure, the glycine cleavage system is composed of four proteins: P, T, L and H. The cofactor is (R)-lipoate.

Its function is as follows. The glycine cleavage system catalyzes the degradation of glycine. The H protein shuttles the methylamine group of glycine from the P protein to the T protein. In Pelodictyon phaeoclathratiforme (strain DSM 5477 / BU-1), this protein is Glycine cleavage system H protein.